The chain runs to 306 residues: Pantothenate kinase (306 aa).

91–98 contributes to the ATP binding site; it reads GSVAVGKS.

It belongs to the prokaryotic pantothenate kinase family.

It localises to the cytoplasm. The catalysed reaction is (R)-pantothenate + ATP = (R)-4'-phosphopantothenate + ADP + H(+). It functions in the pathway cofactor biosynthesis; coenzyme A biosynthesis; CoA from (R)-pantothenate: step 1/5. The chain is Pantothenate kinase (coaA) from Streptococcus pyogenes serotype M18 (strain MGAS8232).